The primary structure comprises 159 residues: Large ribosomal subunit protein uL11 (159 aa).

The protein belongs to the universal ribosomal protein uL11 family. Part of the ribosomal stalk of the 50S ribosomal subunit. Interacts with L10 and the large rRNA to form the base of the stalk. L10 forms an elongated spine to which L12 dimers bind in a sequential fashion forming a multimeric L10(L12)X complex.

Forms part of the ribosomal stalk which helps the ribosome interact with GTP-bound translation factors. The sequence is that of Large ribosomal subunit protein uL11 from Methanococcus maripaludis (strain DSM 14266 / JCM 13030 / NBRC 101832 / S2 / LL).